The sequence spans 481 residues: 2-succinylbenzoate--CoA ligase (481 aa).

It belongs to the ATP-dependent AMP-binding enzyme family. MenE subfamily.

The catalysed reaction is 2-succinylbenzoate + ATP + CoA = 2-succinylbenzoyl-CoA + AMP + diphosphate. The protein operates within quinol/quinone metabolism; 1,4-dihydroxy-2-naphthoate biosynthesis; 1,4-dihydroxy-2-naphthoate from chorismate: step 5/7. Its pathway is quinol/quinone metabolism; menaquinone biosynthesis. Functionally, converts 2-succinylbenzoate (OSB) to 2-succinylbenzoyl-CoA (OSB-CoA). This chain is 2-succinylbenzoate--CoA ligase, found in Bacillus cereus (strain Q1).